A 425-amino-acid chain; its full sequence is Gamma-glutamyl phosphate reductase (425 aa).

Belongs to the gamma-glutamyl phosphate reductase family.

Its subcellular location is the cytoplasm. The catalysed reaction is L-glutamate 5-semialdehyde + phosphate + NADP(+) = L-glutamyl 5-phosphate + NADPH + H(+). It functions in the pathway amino-acid biosynthesis; L-proline biosynthesis; L-glutamate 5-semialdehyde from L-glutamate: step 2/2. In terms of biological role, catalyzes the NADPH-dependent reduction of L-glutamate 5-phosphate into L-glutamate 5-semialdehyde and phosphate. The product spontaneously undergoes cyclization to form 1-pyrroline-5-carboxylate. This is Gamma-glutamyl phosphate reductase from Novosphingobium aromaticivorans (strain ATCC 700278 / DSM 12444 / CCUG 56034 / CIP 105152 / NBRC 16084 / F199).